Here is a 496-residue protein sequence, read N- to C-terminus: Probable cytosol aminopeptidase (496 aa).

Mn(2+)-binding residues include K267 and D272. K279 is an active-site residue. D290, D349, and E351 together coordinate Mn(2+). Residue R353 is part of the active site.

The protein belongs to the peptidase M17 family. Mn(2+) serves as cofactor.

Its subcellular location is the cytoplasm. It carries out the reaction Release of an N-terminal amino acid, Xaa-|-Yaa-, in which Xaa is preferably Leu, but may be other amino acids including Pro although not Arg or Lys, and Yaa may be Pro. Amino acid amides and methyl esters are also readily hydrolyzed, but rates on arylamides are exceedingly low.. The catalysed reaction is Release of an N-terminal amino acid, preferentially leucine, but not glutamic or aspartic acids.. Functionally, presumably involved in the processing and regular turnover of intracellular proteins. Catalyzes the removal of unsubstituted N-terminal amino acids from various peptides. This chain is Probable cytosol aminopeptidase, found in Methylobacillus flagellatus (strain ATCC 51484 / DSM 6875 / VKM B-1610 / KT).